A 442-amino-acid chain; its full sequence is Testican-1 (442 aa).

The N-terminal stretch at 1–21 (MPAIAVLAAAAAAWCFLQVDS) is a signal peptide. 8 disulfides stabilise this stretch: Cys-89-Cys-100, Cys-94-Cys-110, Cys-139-Cys-169, Cys-142-Cys-162, Cys-151-Cys-183, Cys-316-Cys-340, Cys-351-Cys-358, and Cys-360-Cys-379. A Kazal-like domain is found at 133–185 (PSNLVKCKPCPVAQSAMVCGSDGHTYTSKCKLEFHACSTGKSLNSLCDGPCPC). One can recognise a Thyroglobulin type-1 domain in the interval 313–379 (GLPCQNEMNR…GSRKQGTVSC (67 aa)). Disordered regions lie at residues 375–395 (GTVSCEEEQETSGDFGSGGSV) and 420–442 (TRAVREDDEDEDDDKEDEVGYIW). O-linked (Xyl...) (glycosaminoglycan) serine glycosylation is found at Ser-386 and Ser-391. The span at 425–442 (EDDEDEDDDKEDEVGYIW) shows a compositional bias: acidic residues.

Post-translationally, contains chondroitin sulfate and heparan sulfate O-linked oligosaccharides. As to expression, predominantly expressed in the postsynaptic area of pyramidal neurons.

The protein localises to the secreted. It is found in the extracellular space. Its subcellular location is the extracellular matrix. In terms of biological role, may play a role in cell-cell and cell-matrix interactions. May contribute to various neuronal mechanisms in the central nervous system. The chain is Testican-1 (Spock1) from Mus musculus (Mouse).